A 255-amino-acid chain; its full sequence is 3-oxoacyl-[acyl-carrier-protein] reductase MabA (255 aa).

NADP(+) contacts are provided by residues R33–I35, R55, D69–V70, G98, Y161, K165, I194, and R205. Y161 (proton acceptor) is an active-site residue.

This sequence belongs to the short-chain dehydrogenases/reductases (SDR) family. As to quaternary structure, homotetramer.

Its subcellular location is the secreted. It localises to the cell wall. The enzyme catalyses a (3R)-hydroxyacyl-[ACP] + NADP(+) = a 3-oxoacyl-[ACP] + NADPH + H(+). It participates in lipid metabolism; mycolic acid biosynthesis. Part of the mycobacterial fatty acid elongation system FAS-II, which is involved in mycolic acid biosynthesis. Catalyzes the NADPH-dependent reduction of beta-ketoacyl derivatives, the second step of the FAS-II elongation cycle. In Mycobacterium avium, this protein is 3-oxoacyl-[acyl-carrier-protein] reductase MabA.